Consider the following 389-residue polypeptide: MAQSEYLFTSESVSEGHPDKVCDRISDAIVDAFLAEDPHSRVALETMATTNFVVLAGEVRGPDSLTHDRLKEIAREAIKDIGYEQRGFHWKDAEIVSHVHSQSADIAVGVDAAGNKDEGAGDQGIMFGYACTETEELMPAPIALSHAILKSLAEFRHGGDTSFGPDSKSQVTLRYVDGKPVGAASVVVSTQHAGNLSQDEVRELVRPHVLKVLPEGWMCPEEEFYVNPTGRFVIGGPDGDCGLTGRKIIVDTYGGAAPHGGGAFSGKDPTKVDRSAAYAARYLAKNVVAAGLAEKCVIQVSYAIGVSKPLSVYVNTQGTGQVDEQRLAVVLQQLMDLSPRGIRQHLQLSRPIYARTAAYGHFGRKPEKDGGFSWERTDLVAGLKTAFGA.

H17 is a binding site for ATP. A Mg(2+)-binding site is contributed by D19. K(+) is bound at residue E45. 2 residues coordinate L-methionine: E58 and Q102. The flexible loop stretch occupies residues 102 to 112; it reads QSADIAVGVDA. Residues 166–168, 231–232, D240, 246–247, A263, and K267 contribute to the ATP site; these read DSK, RF, and RK. L-methionine is bound at residue D240. K271 serves as a coordination point for L-methionine.

The protein belongs to the AdoMet synthase family. Homotetramer; dimer of dimers. Mg(2+) is required as a cofactor. K(+) serves as cofactor.

It is found in the cytoplasm. It catalyses the reaction L-methionine + ATP + H2O = S-adenosyl-L-methionine + phosphate + diphosphate. The protein operates within amino-acid biosynthesis; S-adenosyl-L-methionine biosynthesis; S-adenosyl-L-methionine from L-methionine: step 1/1. Its function is as follows. Catalyzes the formation of S-adenosylmethionine (AdoMet) from methionine and ATP. The overall synthetic reaction is composed of two sequential steps, AdoMet formation and the subsequent tripolyphosphate hydrolysis which occurs prior to release of AdoMet from the enzyme. The chain is S-adenosylmethionine synthase 2 from Rhodospirillum rubrum (strain ATCC 11170 / ATH 1.1.1 / DSM 467 / LMG 4362 / NCIMB 8255 / S1).